Reading from the N-terminus, the 441-residue chain is Alpha-methylserine aldolase (441 aa).

Lys256 carries the post-translational modification N6-(pyridoxal phosphate)lysine.

This sequence belongs to the SHMT family. Alpha-methylserine aldolase subfamily. Homodimer. Pyridoxal 5'-phosphate is required as a cofactor.

It carries out the reaction 2-methyl-L-serine = formaldehyde + L-alanine. Functionally, catalyzes the reversible interconversion of alpha-methyl-L-serine to L-alanine and formaldehyde. The protein is Alpha-methylserine aldolase of Variovorax paradoxus.